The sequence spans 966 residues: Muscular LMNA-interacting protein (966 aa).

Ser129 carries the post-translational modification Phosphoserine. Disordered stretches follow at residues 132 to 154, 182 to 207, 303 to 337, 354 to 388, 434 to 562, 597 to 684, 785 to 837, and 929 to 966; these read EDEA…IATR, SHPE…TSEQ, LAPE…SLRS, PSPK…LKSP, IKQT…TRPS, KRTC…TPSL, SMHS…SQLT, and SLRD…DSKE. Residues 144-810 are required for interaction with ISL1; sequence PPGATGNIAT…GSETIKTPTT (667 aa). Polar residues-rich tracts occupy residues 195 to 207 and 325 to 337; these read KHGQ…TSEQ and TSPS…SLRS. 3 stretches are compositionally biased toward low complexity: residues 354 to 387, 437 to 455, and 478 to 497; these read PSPK…GLKS, TPST…TGST, and PLSQ…SYAA. Ser486 bears the Phosphoserine mark. Residues 507 to 521 show a composition bias toward polar residues; sequence TLRSSTTPPQSQTDL. Basic and acidic residues-rich tracts occupy residues 542-555 and 597-607; these read GRKD…EKNR and KRTCSQRHSDQ. 2 stretches are compositionally biased toward polar residues: residues 639–649 and 657–684; these read SSLTQALQRSP and GSAT…TPSL. The span at 785-797 shows a compositional bias: low complexity; that stretch reads SMHSSDSPSRPSQ. Ser791 bears the Phosphoserine mark. Polar residues predominate over residues 798–810; the sequence is TMLGSETIKTPTT. A compositionally biased stretch (low complexity) spans 825 to 834; the sequence is SSSSSTTSES. Polar residues predominate over residues 937–946; that stretch reads SPTLLSQDTY. Residues 957 to 966 show a composition bias toward basic and acidic residues; that stretch reads PEHDTLDSKE.

Directly interacts with LMNA. Interacts with ISL1 (via N-terminal domain); the interaction represses ISL1 transactivator activity. Interactions of ISL1 with MLIP1 and GCN5/KAT2A may be mutually exclusive. In terms of tissue distribution, expressed in cardiomyoctes. Expression is highly reduced in hypertrophic cardiomyocytes.

It localises to the nucleus. Its subcellular location is the nucleus envelope. It is found in the PML body. The protein localises to the cytoplasm. The protein resides in the cytosol. It localises to the cell membrane. Its subcellular location is the sarcolemma. In terms of biological role, required for myoblast differentiation into myotubes, possibly acting as a transcriptional regulator of the myogenic program. Required for cardiac adaptation to stress through integrated regulation of the AKT/mTOR pathways and FOXO1. Regulates cardiac homeostasis and plays a role in the protection against cardiac hypertrophy. Binds chromatin. May act as a transcriptional cofactor for ISL1, repressing its transcriptional activity. May also repress MYOCD transcriptional activity. This Rattus norvegicus (Rat) protein is Muscular LMNA-interacting protein.